Here is a 459-residue protein sequence, read N- to C-terminus: MAP kinase-interacting serine/threonine-protein kinase 2 (459 aa).

The interval 37–67 (DFSPQCEARPDMPSSQPIDIPDAKKRGRKKK) is disordered. The Nuclear localization signal motif lies at 60–66 (KKRGRKK). Residue serine 74 is modified to Phosphoserine. Residues 84-368 (QLQEDVLGEG…AAQVLQHPWV (285 aa)) enclose the Protein kinase domain. ATP contacts are provided by residues 90 to 98 (LGEGAHARV) and lysine 113. 160-162 (EKM) contacts staurosporine. The Proton acceptor role is filled by aspartate 205. Residue glutamate 209 participates in staurosporine binding. Threonine 244 and threonine 249 each carry phosphothreonine. Cysteine 299, cysteine 311, and cysteine 314 together coordinate Zn(2+). Threonine 379 carries the post-translational modification Phosphothreonine. Serine 431 and serine 434 each carry phosphoserine. An MAP kinase binding motif is present at residues 438 to 442 (LAQRR). A Phosphoserine modification is found at serine 446. Position 450 is a phosphothreonine (threonine 450).

The protein belongs to the protein kinase superfamily. CAMK Ser/Thr protein kinase family. Interacts with ESR2 and EIF4E in the nucleus. Monomer. Interacts with the C-terminal regions of EIF4G1 and EIF4G2; this interaction is promoted when MAPK pathways are repressed but repressed upon ERK proteins activation. Also binds to dephosphorylated MAPK3/ERK1 and MAPK1/ERK2. Interaction with phosphorylated MAPK3/ERK1 and MAPK1/ERK2 protects it from dephosphorylation and inactivation. Requires Mg(2+) as cofactor. Zn(2+) serves as cofactor. Dual phosphorylation of Thr-244 and Thr-249 activates the kinase. Phosphorylation of Thr-379 activates the kinase. Phosphorylated upon arsenic trioxide As(2)O(3) treatment. Phosphorylated by MAPK1/ERK2, MAPK11 and MAPK14. Dephosphorylated by PP2A. Ubiquitously expressed in all tissues examined, with high levels in skeletal muscle and low levels in brain.

It is found in the cytoplasm. The protein resides in the nucleus. It localises to the PML body. The enzyme catalyses L-seryl-[protein] + ATP = O-phospho-L-seryl-[protein] + ADP + H(+). It carries out the reaction L-threonyl-[protein] + ATP = O-phospho-L-threonyl-[protein] + ADP + H(+). With respect to regulation, inhibited by CGP57380 and staurosporine. In terms of biological role, serine/threonine-protein kinase that phosphorylates SFPQ/PSF, HNRNPA1 and EIF4E. May play a role in the response to environmental stress and cytokines. Appears to regulate translation by phosphorylating EIF4E, thus increasing the affinity of this protein for the 7-methylguanosine-containing mRNA cap. Required for mediating PP2A-inhibition-induced EIF4E phosphorylation. Triggers EIF4E shuttling from cytoplasm to nucleus. Enhances the formation of EIF4F complex in pachytene spermatocytes, thus promoting mRNA translation during spermatogenesis. Displays a high basal kinase activity. Acts as a mediator of the suppressive effects of IFNgamma on hematopoiesis. Negative regulator for signals that control generation of arsenic trioxide As(2)O(3)-dependent apoptosis and anti-leukemic responses. Involved in anti-apoptotic signaling in response to serum withdrawal. This is MAP kinase-interacting serine/threonine-protein kinase 2 (Mknk2) from Mus musculus (Mouse).